Reading from the N-terminus, the 349-residue chain is Diacylglycerol O-acyltransferase 2B (349 aa).

2 helical membrane passes run 44–64 (ICLI…ILIM) and 114–134 (YIMS…NFAT).

This sequence belongs to the diacylglycerol acyltransferase family.

The protein resides in the endoplasmic reticulum membrane. The catalysed reaction is an acyl-CoA + a 1,2-diacyl-sn-glycerol = a triacyl-sn-glycerol + CoA. The protein operates within glycerolipid metabolism; triacylglycerol biosynthesis. Catalyzes the terminal and only committed step in triacylglycerol synthesis by using diacylglycerol and fatty acyl CoA as substrates. Required for storage lipid synthesis. The chain is Diacylglycerol O-acyltransferase 2B (DGAT2B) from Umbelopsis ramanniana (Oleaginous fungus).